The sequence spans 338 residues: Ferredoxin--NADP reductase (338 aa).

The FAD site is built by aspartate 35, glutamine 43, tyrosine 48, alanine 88, phenylalanine 122, aspartate 289, and threonine 330.

Belongs to the ferredoxin--NADP reductase type 2 family. Homodimer. It depends on FAD as a cofactor.

The catalysed reaction is 2 reduced [2Fe-2S]-[ferredoxin] + NADP(+) + H(+) = 2 oxidized [2Fe-2S]-[ferredoxin] + NADPH. This Ehrlichia canis (strain Jake) protein is Ferredoxin--NADP reductase.